A 62-amino-acid polypeptide reads, in one-letter code: UPF0434 protein ASA_1553 (62 aa).

Belongs to the UPF0434 family.

In Aeromonas salmonicida (strain A449), this protein is UPF0434 protein ASA_1553.